The primary structure comprises 345 residues: NADH-quinone oxidoreductase subunit H (345 aa).

Helical transmembrane passes span 13 to 33, 84 to 104, 115 to 135, 161 to 181, 190 to 210, 248 to 268, 277 to 297, and 309 to 329; these read VLIL…LLFL, FMLA…VIPF, VAIL…IMGG, LGLI…GGIV, FFSW…ISCL, YIAI…GWLS, VFWM…VKAI, and LGWK…AFAA.

Belongs to the complex I subunit 1 family. As to quaternary structure, NDH-1 is composed of 14 different subunits. Subunits NuoA, H, J, K, L, M, N constitute the membrane sector of the complex.

It localises to the cell inner membrane. It carries out the reaction a quinone + NADH + 5 H(+)(in) = a quinol + NAD(+) + 4 H(+)(out). Its function is as follows. NDH-1 shuttles electrons from NADH, via FMN and iron-sulfur (Fe-S) centers, to quinones in the respiratory chain. The immediate electron acceptor for the enzyme in this species is believed to be ubiquinone. Couples the redox reaction to proton translocation (for every two electrons transferred, four hydrogen ions are translocated across the cytoplasmic membrane), and thus conserves the redox energy in a proton gradient. This subunit may bind ubiquinone. In Roseobacter denitrificans (strain ATCC 33942 / OCh 114) (Erythrobacter sp. (strain OCh 114)), this protein is NADH-quinone oxidoreductase subunit H.